We begin with the raw amino-acid sequence, 487 residues long: Glutamate mutase epsilon subunit (487 aa).

Position 62 (arginine 62) interacts with L-glutamate. An adenosylcob(III)alamin-binding site is contributed by glycine 64. Arginine 96 lines the L-glutamate pocket. Asparagine 119 is an adenosylcob(III)alamin binding site. L-glutamate-binding positions include 145–146 (RH), glutamate 167, and tyrosine 173. Proline 176 serves as a coordination point for adenosylcob(III)alamin. Position 177 (tyrosine 177) interacts with L-glutamate. Residues phenylalanine 289, lysine 318, and glutamate 322 each contribute to the adenosylcob(III)alamin site. Residues 465-487 (SDGKLIGRPGGDNSPAGGASDAD) are disordered.

Belongs to the methylaspartate mutase GlmE subunit family. Heterotetramer composed of 2 epsilon subunits (GlmE) and 2 sigma subunits (GlmS). GlmE exists as a homodimer and GlmS as a monomer. It depends on adenosylcob(III)alamin as a cofactor.

It carries out the reaction (2S,3S)-3-methyl-L-aspartate = L-glutamate. Its pathway is amino-acid degradation; L-glutamate degradation via mesaconate pathway; acetate and pyruvate from L-glutamate: step 1/4. Catalyzes the carbon skeleton rearrangement of L-glutamate to L-threo-3-methylaspartate ((2S,3S)-3-methylaspartate). This Haloarcula marismortui (strain ATCC 43049 / DSM 3752 / JCM 8966 / VKM B-1809) (Halobacterium marismortui) protein is Glutamate mutase epsilon subunit.